Consider the following 218-residue polypeptide: Imidazole glycerol phosphate synthase subunit HisH (218 aa).

Residues 1-213 (MTTIIDYGIG…AALPTTEEAG (213 aa)) enclose the Glutamine amidotransferase type-1 domain. The active-site Nucleophile is the Cys-79. Active-site residues include His-188 and Glu-190.

In terms of assembly, heterodimer of HisH and HisF.

It is found in the cytoplasm. The enzyme catalyses 5-[(5-phospho-1-deoxy-D-ribulos-1-ylimino)methylamino]-1-(5-phospho-beta-D-ribosyl)imidazole-4-carboxamide + L-glutamine = D-erythro-1-(imidazol-4-yl)glycerol 3-phosphate + 5-amino-1-(5-phospho-beta-D-ribosyl)imidazole-4-carboxamide + L-glutamate + H(+). The catalysed reaction is L-glutamine + H2O = L-glutamate + NH4(+). Its pathway is amino-acid biosynthesis; L-histidine biosynthesis; L-histidine from 5-phospho-alpha-D-ribose 1-diphosphate: step 5/9. IGPS catalyzes the conversion of PRFAR and glutamine to IGP, AICAR and glutamate. The HisH subunit catalyzes the hydrolysis of glutamine to glutamate and ammonia as part of the synthesis of IGP and AICAR. The resulting ammonia molecule is channeled to the active site of HisF. This chain is Imidazole glycerol phosphate synthase subunit HisH, found in Salinibacter ruber (strain DSM 13855 / M31).